A 376-amino-acid polypeptide reads, in one-letter code: Proton extrusion protein PxcA (376 aa).

4 helical membrane passes run 150–170 (TLISLKIILLLILVPLLVQQM), 251–271 (AVKNVLADIAALIAFAFVCII), 299–319 (IILFTDMFVGFHSPEGWQVLL), and 334–354 (FILLFIATFPVILATIFKYWI).

It belongs to the CemA family.

Its subcellular location is the cell inner membrane. Functionally, required for H(+) efflux immediately after light irradiation to form a rapid H(+) concentration gradient across the thylakoid membranes. Together with PxcL, contributes to transient H(+) uptake following dark to light transition. This Prochlorococcus marinus (strain MIT 9303) protein is Proton extrusion protein PxcA.